A 335-amino-acid chain; its full sequence is Trans-1,2-dihydrobenzene-1,2-diol dehydrogenase (335 aa).

Belongs to the Gfo/Idh/MocA family. Homodimer. In terms of tissue distribution, liver, lens, spleen, kidney and small intestine.

The enzyme catalyses (1R,2R)-1,2-dihydrobenzene-1,2-diol + NADP(+) = catechol + NADPH + H(+). The catalysed reaction is D-xylose + NADP(+) = D-xylono-1,5-lactone + NADPH + H(+). Strongly inhibited by isoascorbic acid, 4-hydroxyacetophenone and chloromercuriphenylsulphonate. Stimulated by various salts. In Sus scrofa (Pig), this protein is Trans-1,2-dihydrobenzene-1,2-diol dehydrogenase (DHDH).